Reading from the N-terminus, the 447-residue chain is tRNA (guanine(37)-N(1))-methyltransferase (447 aa).

S-adenosyl-L-methionine is bound by residues His-241, 285-286 (DL), and 313-314 (DV).

This sequence belongs to the class I-like SAM-binding methyltransferase superfamily. TRM5/TYW2 family. As to quaternary structure, monomer.

The protein resides in the mitochondrion matrix. It is found in the nucleus. The protein localises to the cytoplasm. It carries out the reaction guanosine(37) in tRNA + S-adenosyl-L-methionine = N(1)-methylguanosine(37) in tRNA + S-adenosyl-L-homocysteine + H(+). In terms of biological role, specifically methylates the N1 position of guanosine-37 in various cytoplasmic and mitochondrial tRNAs. Methylation is not dependent on the nature of the nucleoside 5' of the target nucleoside. This is the first step in the biosynthesis of wybutosine (yW), a modified base adjacent to the anticodon of tRNAs and required for accurate decoding. The chain is tRNA (guanine(37)-N(1))-methyltransferase from Giardia intestinalis (strain ATCC 50803 / WB clone C6) (Giardia lamblia).